The chain runs to 241 residues: B-cell receptor-associated protein 29 (241 aa).

The Lumenal segment spans residues 1 to 6 (MTLQWA). Residues 7–27 (AVATFLYAEIGLILIFCLPFI) form a helical membrane-spanning segment. Over 28 to 43 (PPQRWQKIFSFNVWGK) the chain is Cytoplasmic. The chain crosses the membrane as a helical span at residues 44–64 (IATFWNKAFLTIIILLIVLFL). The Lumenal segment spans residues 65-103 (DAVREVRKYSSVHTIEKSSTSRPDAYEHTQMKLFRSQRN). A helical membrane pass occupies residues 104–124 (LYISGFSLFFWLVLRRLVTLI). At 125 to 241 (TQLAKELSNK…RLERGNKKRL (117 aa)) the chain is on the cytoplasmic side. Residues 166–233 (GKDEECVLEA…KEHSELQDRL (68 aa)) adopt a coiled-coil conformation. A disordered region spans residues 193 to 223 (KTSDALSKAQNDVMEMKMQSERLSKEYDQLL). Basic and acidic residues predominate over residues 206-223 (MEMKMQSERLSKEYDQLL). Residues 238-241 (KKRL) carry the Di-lysine motif motif.

Belongs to the BCAP29/BCAP31 family. In terms of assembly, homodimer and heterodimer with BCAP31. Binds CASP8 as a complex containing BCAP31, BCAP29, BCL2 and/or BCL2L1. Interacts with VAMP3, VAMP1 and membrane IgD immunoglobulins. May interact with ACTG1 and non-muscle myosin II.

The protein resides in the endoplasmic reticulum membrane. May play a role in anterograde transport of membrane proteins from the endoplasmic reticulum to the Golgi. May be involved in CASP8-mediated apoptosis. This is B-cell receptor-associated protein 29 (BCAP29) from Pongo abelii (Sumatran orangutan).